Consider the following 973-residue polypeptide: Peptidyl-glycine alpha-amidating monooxygenase (973 aa).

The signal sequence occupies residues 1-20 (MAGRVPSLLVLLVFPSSCLA). Positions 1-494 (MAGRVPSLLV…EGTWEPEHTG (494 aa)) are peptidylglycine alpha-hydroxylating monooxygenase. A propeptide spanning residues 21 to 30 (FRSPLSVFKR) is cleaved from the precursor. Topologically, residues 31–863 (FKETTRPFSN…QKLIKEPGSG (833 aa)) are intragranular. 5 disulfide bridges follow: Cys-42–Cys-181, Cys-76–Cys-121, Cys-109–Cys-126, Cys-222–Cys-329, and Cys-288–Cys-310. Cu(2+) contacts are provided by His-102 and His-103. Positions 167, 237, 239, and 309 each coordinate Cu(2+). The tract at residues 495 to 817 (DFHMEEALDW…LTEKLEHRSV (323 aa)) is peptidyl-alpha-hydroxyglycine alpha-amidating lyase. NHL repeat units follow at residues 498–541 (MEEA…NSFD), 567–608 (AAVL…LDPN), 617–662 (LGRS…FSPS), and 670–714 (GEES…FKTD). Val-517 contacts Ca(2+). Residue Arg-530 coordinates a protein. His-582 contacts Zn(2+). Leu-584 lines the Ca(2+) pocket. A disulfide bridge connects residues Cys-631 and Cys-652. Tyr-651 is a binding site for a protein. Zn(2+) is bound at residue His-687. The cysteines at positions 699 and 710 are disulfide-linked. Arg-703 contributes to the a protein binding site. Asn-762 carries N-linked (GlcNAc...) asparagine glycosylation. One copy of the NHL 5 repeat lies at 766–809 (GEIIDIFKPVRKHFDMPHDIVASEDGTVYIGDAHTNTVWKFTLT). His-783 provides a ligand contact to Zn(2+). Ca(2+) is bound at residue Asp-784. Residues 864 to 887 (VPVVLITTLLVIPVVVLLAIAIFI) traverse the membrane as a helical segment. 2 positions are modified to sulfotyrosine: Ile-875 and Arg-893. The Cytoplasmic portion of the chain corresponds to 888-973 (RWKKSRAFGD…PLPALAPSSS (86 aa)). Phosphoserine is present on residues Ser-918, Ser-929, and Ser-942. The interval 925–942 (NFFASRKGYSRKGFDRLS) is interaction with RASSF9. The interval 937 to 973 (GFDRLSTEGSDQEKEDDGSESEEEYSAPLPALAPSSS) is disordered. At Thr-943 the chain carries Phosphothreonine. Ser-946 is subject to Phosphoserine; by UHMK1; in vitro. Positions 949–961 (EKEDDGSESEEEY) are enriched in acidic residues. Ser-957 carries the phosphoserine modification. The span at 962-973 (SAPLPALAPSSS) shows a compositional bias: low complexity.

It in the C-terminal section; belongs to the peptidyl-alpha-hydroxyglycine alpha-amidating lyase family. The protein in the N-terminal section; belongs to the copper type II ascorbate-dependent monooxygenase family. In terms of assembly, monomer. Interacts with RASSF9. The cofactor is Zn(2+). Cu(2+) serves as cofactor.

It localises to the cytoplasmic vesicle. Its subcellular location is the secretory vesicle membrane. The protein localises to the membrane. The protein resides in the secreted. The enzyme catalyses a [peptide]-C-terminal glycine + 2 L-ascorbate + O2 = a [peptide]-C-terminal (2S)-2-hydroxyglycine + 2 monodehydro-L-ascorbate radical + H2O. The catalysed reaction is a [peptide]-C-terminal (2S)-2-hydroxyglycine = a [peptide]-C-terminal amide + glyoxylate. It catalyses the reaction N-dodecanoylglycine + 2 L-ascorbate + O2 = N-dodecanoyl-(2S)-hydroxyglycine + 2 monodehydro-L-ascorbate radical + H2O. It carries out the reaction N-dodecanoyl-(2S)-hydroxyglycine = dodecanamide + glyoxylate. The enzyme catalyses N-(9Z,12Z,15Z)-octadecatrienoylglycine + 2 L-ascorbate + O2 = N-(9Z,12Z,15Z)-octadecatrienoyl-(2S)-hydroxyglycine + 2 monodehydro-L-ascorbate radical + H2O. The catalysed reaction is N-(9Z,12Z,15Z)-octadecatrienoyl-(2S)-hydroxyglycine = (9Z,12Z,15Z)-octadecatrienamide + glyoxylate. It catalyses the reaction N-(9Z-octadecenoyl)glycine + 2 L-ascorbate + O2 = N-(9Z-octadecenoyl)-(2S)-hydroxyglycine + 2 monodehydro-L-ascorbate radical + H2O. It carries out the reaction N-(9Z-octadecenoyl)-(2S)-hydroxyglycine = (9Z)-octadecenamide + glyoxylate. The enzyme catalyses N-tetradecanoylglycine + 2 L-ascorbate + O2 = N-tetradecanoyl-(2S)-hydroxyglycine + 2 monodehydro-L-ascorbate radical + H2O. The catalysed reaction is N-tetradecanoyl-(2S)-hydroxyglycine = tetradecamide + glyoxylate. It catalyses the reaction N-decanoylglycine + 2 L-ascorbate + O2 = N-decanoyl-(2S)-hydroxyglycine + 2 monodehydro-L-ascorbate radical + H2O. It carries out the reaction N-decanoyl-(2S)-hydroxyglycine = decanamide + glyoxylate. The enzyme catalyses N-octanoylglycine + 2 L-ascorbate + O2 = N-octanoyl-(2S)-hydroxyglycine + 2 monodehydro-L-ascorbate radical + H2O. The catalysed reaction is N-octanoyl-(2S)-hydroxyglycine = octanamide + glyoxylate. Its activity is regulated as follows. PAM activity is inhibited by EDTA, phenylglyoxal and diethyl pyrocarbonate. PAL activity is stimulated by cadmium and inhibited by mercury. In terms of biological role, bifunctional enzyme that catalyzes amidation of the C-terminus of proteins. Alpha-amidation is present at the C-terminus of many endocrine hormones and neuropeptides and is required for their activity. C-terminal amidation also takes place in response to protein fragmentation triggered by oxidative stress, promoting degradation of amidated protein fragments by the proteasome. Alpha-amidation involves two sequential reactions, both of which are catalyzed by separate catalytic domains of the enzyme. The first step, catalyzed by peptidyl alpha-hydroxylating monooxygenase (PHM) domain, is the copper-, ascorbate-, and O2- dependent stereospecific hydroxylation (with S stereochemistry) at the alpha-carbon (C-alpha) of the C-terminal glycine of the peptidylglycine substrate. The second step, catalyzed by the peptidylglycine amidoglycolate lyase (PAL) domain, is the zinc-dependent cleavage of the N-C-alpha bond, producing the alpha-amidated peptide and glyoxylate. Similarly, catalyzes the two-step conversion of an N-fatty acylglycine to a primary fatty acid amide and glyoxylate. This chain is Peptidyl-glycine alpha-amidating monooxygenase, found in Homo sapiens (Human).